A 173-amino-acid polypeptide reads, in one-letter code: Flavodoxin 2 (173 aa).

In terms of domain architecture, Flavodoxin-like spans 3–165; that stretch reads MGLFYGSSTC…RIQSWCEQIL (163 aa).

It belongs to the flavodoxin family. The cofactor is FMN.

In terms of biological role, low-potential electron donor to a number of redox enzymes. The chain is Flavodoxin 2 (fldB) from Escherichia coli O157:H7.